The chain runs to 199 residues: Fe/S biogenesis protein NfuA (199 aa).

Residues Cys-156 and Cys-159 each contribute to the [4Fe-4S] cluster site.

This sequence belongs to the NfuA family. Homodimer. The cofactor is [4Fe-4S] cluster.

Involved in iron-sulfur cluster biogenesis. Binds a 4Fe-4S cluster, can transfer this cluster to apoproteins, and thereby intervenes in the maturation of Fe/S proteins. Could also act as a scaffold/chaperone for damaged Fe/S proteins. The chain is Fe/S biogenesis protein NfuA from Actinobacillus pleuropneumoniae serotype 5b (strain L20).